We begin with the raw amino-acid sequence, 469 residues long: Probable glycine dehydrogenase (decarboxylating) subunit 1 (469 aa).

This sequence belongs to the GcvP family. N-terminal subunit subfamily. As to quaternary structure, the glycine cleavage system is composed of four proteins: P, T, L and H. In this organism, the P 'protein' is a heterodimer of two subunits.

It catalyses the reaction N(6)-[(R)-lipoyl]-L-lysyl-[glycine-cleavage complex H protein] + glycine + H(+) = N(6)-[(R)-S(8)-aminomethyldihydrolipoyl]-L-lysyl-[glycine-cleavage complex H protein] + CO2. The glycine cleavage system catalyzes the degradation of glycine. The P protein binds the alpha-amino group of glycine through its pyridoxal phosphate cofactor; CO(2) is released and the remaining methylamine moiety is then transferred to the lipoamide cofactor of the H protein. This chain is Probable glycine dehydrogenase (decarboxylating) subunit 1, found in Staphylothermus marinus (strain ATCC 43588 / DSM 3639 / JCM 9404 / F1).